The primary structure comprises 95 residues: uncharacterized protein (95 aa).

It belongs to the inositol monophosphatase superfamily.

This is an uncharacterized protein from Rhizobium leguminosarum bv. phaseoli.